The chain runs to 454 residues: Kynurenine 3-monooxygenase (454 aa).

This sequence belongs to the aromatic-ring hydroxylase family. KMO subfamily. FAD is required as a cofactor.

It carries out the reaction L-kynurenine + NADPH + O2 + H(+) = 3-hydroxy-L-kynurenine + NADP(+) + H2O. It functions in the pathway cofactor biosynthesis; NAD(+) biosynthesis; quinolinate from L-kynurenine: step 1/3. Catalyzes the hydroxylation of L-kynurenine (L-Kyn) to form 3-hydroxy-L-kynurenine (L-3OHKyn). Required for synthesis of quinolinic acid. The chain is Kynurenine 3-monooxygenase from Salinispora arenicola (strain CNS-205).